A 103-amino-acid chain; its full sequence is Sec-independent protein translocase protein TatA (103 aa).

The helical transmembrane segment at 1-21 (MSLGPWEIAIIVLLIIVLFGA) threads the bilayer. The disordered stretch occupies residues 42 to 103 (VKEMQKDDET…QNYEDPNRTP (62 aa)). Positions 52–90 (PAQPEQQPQGYQHPQQIEAPQNLQQPNFQQHYQNQPQQP) are enriched in low complexity. Positions 94–103 (QNYEDPNRTP) are enriched in basic and acidic residues.

This sequence belongs to the TatA/E family. The Tat system comprises two distinct complexes: a TatABC complex, containing multiple copies of TatA, TatB and TatC subunits, and a separate TatA complex, containing only TatA subunits. Substrates initially bind to the TatABC complex, which probably triggers association of the separate TatA complex to form the active translocon.

The protein localises to the cell membrane. Its function is as follows. Part of the twin-arginine translocation (Tat) system that transports large folded proteins containing a characteristic twin-arginine motif in their signal peptide across membranes. TatA could form the protein-conducting channel of the Tat system. This is Sec-independent protein translocase protein TatA from Corynebacterium efficiens (strain DSM 44549 / YS-314 / AJ 12310 / JCM 11189 / NBRC 100395).